We begin with the raw amino-acid sequence, 223 residues long: ATP-dependent dethiobiotin synthetase BioD (223 aa).

12–17 (EIGKTH) serves as a coordination point for ATP. T16 is a binding site for Mg(2+). K37 is an active-site residue. A substrate-binding site is contributed by S41. ATP is bound by residues D52 and 118–121 (EGVG). D52 and E118 together coordinate Mg(2+).

Belongs to the dethiobiotin synthetase family. Homodimer. Requires Mg(2+) as cofactor.

It localises to the cytoplasm. It carries out the reaction (7R,8S)-7,8-diammoniononanoate + CO2 + ATP = (4R,5S)-dethiobiotin + ADP + phosphate + 3 H(+). It functions in the pathway cofactor biosynthesis; biotin biosynthesis; biotin from 7,8-diaminononanoate: step 1/2. In terms of biological role, catalyzes a mechanistically unusual reaction, the ATP-dependent insertion of CO2 between the N7 and N8 nitrogen atoms of 7,8-diaminopelargonic acid (DAPA, also called 7,8-diammoniononanoate) to form a ureido ring. This chain is ATP-dependent dethiobiotin synthetase BioD, found in Acidiphilium cryptum (strain JF-5).